A 357-amino-acid polypeptide reads, in one-letter code: MNRKIRASDRKIIPPQCEMPKMTYSKIQNILPGLGLSVAITAAAMVLEKIEEHYAGRAWLEALVIAILLGTAVRSLARPGPRFNKGINFSAKLLLEIAVVLLGASISASAVIEAGSGLIFGIAAVVAVAITLSYGIGRLLKLPHRMAVLVACGNSICGNSAIAAMAPVIGAESEDVAASIAFTAILGVIVVLTLPLLVPLLGLSFTQYGILAGLTVYAVPQVLAATAPVSLLSVQLGTLVKLVRVLMLGPVILVFALISGNKNADVKPGFFQLVPWFIIGFLAMMALHSLHLIPEAILPAIQYASMLLTIISMAALGLGVDIRSVASAGGRVTLTAILSLIALCCISLGLIHMLGVA.

11 consecutive transmembrane segments (helical) span residues 29–48 (NILP…MVLE), 58–77 (AWLE…RSLA), 90–112 (SAKL…SAVI), 117–136 (GLIF…SYGI), 149–171 (LVAC…VIGA), 181–203 (AFTA…LLGL), 210–232 (ILAG…VSLL), 242–261 (LVRV…ISGN), 268–290 (PGFF…LHSL), 300–322 (AIQY…GVDI), and 334–356 (LTAI…MLGV).

Belongs to the UPF0324 family.

It is found in the cell membrane. This is UPF0324 membrane protein BMEI1914 from Brucella melitensis biotype 1 (strain ATCC 23456 / CCUG 17765 / NCTC 10094 / 16M).